Consider the following 271-residue polypeptide: 5-amino-6-(5-phospho-D-ribitylamino)uracil phosphatase YbjI (271 aa).

Residue Asp-9 is the Nucleophile of the active site. Position 9 (Asp-9) interacts with Mg(2+). Residue Met-10 participates in phosphate binding. Asp-11 is a binding site for Mg(2+). Residues 44 to 45 and Lys-192 contribute to the phosphate site; that span reads SG. Asp-215 is a Mg(2+) binding site. Asn-218 is a phosphate binding site.

Belongs to the HAD-like hydrolase superfamily. Cof family. The cofactor is Mg(2+). Mn(2+) serves as cofactor. It depends on Co(2+) as a cofactor. Zn(2+) is required as a cofactor.

The catalysed reaction is 5-amino-6-(5-phospho-D-ribitylamino)uracil + H2O = 5-amino-6-(D-ribitylamino)uracil + phosphate. Its pathway is cofactor biosynthesis; riboflavin biosynthesis; 5-amino-6-(D-ribitylamino)uracil from GTP: step 4/4. Catalyzes the dephosphorylation of 5-amino-6-(5-phospho-D-ribitylamino)uracil, and thus could be involved in the riboflavin biosynthesis pathway. Is also able to dephosphorylate flavin mononucleotide (FMN), erythrose 4-phosphate and other phosphoric acid esters. The chain is 5-amino-6-(5-phospho-D-ribitylamino)uracil phosphatase YbjI (ybjI) from Escherichia coli (strain K12).